The following is a 128-amino-acid chain: MRFALMVTGPAYGTQQASSALQFAQAVLAEGHELSSVFFYREGVYNANQFTSPASDEYDLVRGWQALNETQGVELHICVAAALRRGVADETEAKRLGLSGANLQHGFTLSGLGALAQAALTCDRMVQF.

Residue cysteine 78 is the Cysteine persulfide intermediate of the active site.

The protein belongs to the DsrE/TusD family. As to quaternary structure, heterohexamer, formed by a dimer of trimers. The hexameric TusBCD complex contains 2 copies each of TusB, TusC and TusD. The TusBCD complex interacts with TusE.

It is found in the cytoplasm. In terms of biological role, part of a sulfur-relay system required for 2-thiolation of 5-methylaminomethyl-2-thiouridine (mnm(5)s(2)U) at tRNA wobble positions. Accepts sulfur from TusA and transfers it in turn to TusE. The polypeptide is Sulfurtransferase TusD (Enterobacter sp. (strain 638)).